A 116-amino-acid chain; its full sequence is Proline-rich protein 9 (116 aa).

The chain is Proline-rich protein 9 (Prr9) from Mus musculus (Mouse).